The primary structure comprises 161 residues: CASP-like protein 1C2 (161 aa).

The Cytoplasmic segment spans residues 1 to 7 (MAKNTDR). The helical transmembrane segment at 8–28 (ICFLVLRLLAFGATLSAAIVM) threads the bilayer. Residues 29 to 53 (ATSHERTTYLSLSIEAKYSHTPAFK) lie on the Extracellular side of the membrane. The chain crosses the membrane as a helical span at residues 54–74 (YFVIANAIGSAYSLLLLFLPS). The Cytoplasmic portion of the chain corresponds to 75–86 (HGSLWPLVIASD). A helical membrane pass occupies residues 87–107 (VVITMFLTSSISAALSIAYVG). Over 108–131 (KKGNSYAGWLPICDQVPNYCNHVT) the chain is Extracellular. The helical transmembrane segment at 132–152 (GALAAGFIGVVLYMVLLQYSI) threads the bilayer. At 153-161 (YTKCCKSSS) the chain is on the cytoplasmic side.

Belongs to the Casparian strip membrane proteins (CASP) family. As to quaternary structure, homodimer and heterodimers.

The protein localises to the cell membrane. This chain is CASP-like protein 1C2, found in Vitis vinifera (Grape).